The sequence spans 356 residues: Histidinol-phosphate aminotransferase (356 aa).

At K214 the chain carries N6-(pyridoxal phosphate)lysine.

Belongs to the class-II pyridoxal-phosphate-dependent aminotransferase family. Histidinol-phosphate aminotransferase subfamily. As to quaternary structure, homodimer. Requires pyridoxal 5'-phosphate as cofactor.

It catalyses the reaction L-histidinol phosphate + 2-oxoglutarate = 3-(imidazol-4-yl)-2-oxopropyl phosphate + L-glutamate. Its pathway is amino-acid biosynthesis; L-histidine biosynthesis; L-histidine from 5-phospho-alpha-D-ribose 1-diphosphate: step 7/9. This Escherichia coli O9:H4 (strain HS) protein is Histidinol-phosphate aminotransferase.